The primary structure comprises 272 residues: Protein STAY-GREEN 1, chloroplastic (272 aa).

The N-terminal 50 residues, 1–50 (MGTLTTSLVVPSKLNNEQQSSIFIHKTRRKCKKNQSIVPVARLFGPAIFE), are a transit peptide targeting the chloroplast. Residues 201–222 (TSPSSSSGGVGGVKSTSFTSNS) are disordered.

Belongs to the staygreen family. Interacts with PSY1.

The protein localises to the plastid. It localises to the chloroplast. Required to trigger chlorophyll degradation during leaf senescence and fruit ripening. Binds directly PSY1 to regulate the accumulation of lycopene and beta-carotene in the maturing fruits. This chain is Protein STAY-GREEN 1, chloroplastic, found in Solanum lycopersicum (Tomato).